A 439-amino-acid chain; its full sequence is F-box/FBD/LRR-repeat protein At5g56570 (439 aa).

Positions 35 to 81 (PTELSDMPDDLIFKIFSFLPFFKEDLATRFISEYGKGLWNPDPNAIF) constitute an F-box domain. LRR repeat units follow at residues 155-177 (CTTL…WFRL) and 223-246 (VPTL…SFWI). In terms of domain architecture, FBD spans 361–411 (VWEKPTVVPECLSTRLEILKWRDYEGTEHEKDMVGYILANATFLQRATFST).

The protein is F-box/FBD/LRR-repeat protein At5g56570 of Arabidopsis thaliana (Mouse-ear cress).